A 264-amino-acid polypeptide reads, in one-letter code: ATP synthase subunit a (264 aa).

The next 7 membrane-spanning stretches (helical) occupy residues 30–50, 90–110, 111–131, 134–154, 177–197, 208–228, and 235–255; these read WNID…WLFY, IAPL…MDMI, PVDW…KVVP, DVNI…YYSI, IPVN…SLAL, LIFI…ALGV, and LIFH…LTIV.

It belongs to the ATPase A chain family. In terms of assembly, F-type ATPases have 2 components, CF(1) - the catalytic core - and CF(0) - the membrane proton channel. CF(1) has five subunits: alpha(3), beta(3), gamma(1), delta(1), epsilon(1). CF(0) has three main subunits: a(1), b(2) and c(9-12). The alpha and beta chains form an alternating ring which encloses part of the gamma chain. CF(1) is attached to CF(0) by a central stalk formed by the gamma and epsilon chains, while a peripheral stalk is formed by the delta and b chains.

The protein resides in the cell inner membrane. In terms of biological role, key component of the proton channel; it plays a direct role in the translocation of protons across the membrane. This is ATP synthase subunit a from Shewanella frigidimarina (strain NCIMB 400).